The chain runs to 55 residues: Large ribosomal subunit protein bL33 (55 aa).

Belongs to the bacterial ribosomal protein bL33 family.

The polypeptide is Large ribosomal subunit protein bL33 (Bordetella pertussis (strain Tohama I / ATCC BAA-589 / NCTC 13251)).